A 105-amino-acid polypeptide reads, in one-letter code: uncharacterized protein (105 aa).

2 consecutive transmembrane segments (helical) span residues 10–30 (YVVFIISLIVLLIIFYVFKIG) and 48–68 (YPLAISLVIWVIWYFLLYPPS).

It is found in the membrane. This is an uncharacterized protein from Acanthamoeba polyphaga mimivirus (APMV).